The sequence spans 467 residues: 3-isopropylmalate dehydratase large subunit (467 aa).

[4Fe-4S] cluster-binding residues include Cys348, Cys409, and Cys412. The tract at residues 423-448 is disordered; sequence NERSISTSNRNFEGRQGKGSRTHLAS.

It belongs to the aconitase/IPM isomerase family. LeuC type 1 subfamily. As to quaternary structure, heterodimer of LeuC and LeuD. The cofactor is [4Fe-4S] cluster.

It carries out the reaction (2R,3S)-3-isopropylmalate = (2S)-2-isopropylmalate. Its pathway is amino-acid biosynthesis; L-leucine biosynthesis; L-leucine from 3-methyl-2-oxobutanoate: step 2/4. Functionally, catalyzes the isomerization between 2-isopropylmalate and 3-isopropylmalate, via the formation of 2-isopropylmaleate. The sequence is that of 3-isopropylmalate dehydratase large subunit from Bifidobacterium longum (strain DJO10A).